A 362-amino-acid polypeptide reads, in one-letter code: Probable cinnamyl alcohol dehydrogenase 9 (362 aa).

Cysteine 45 is a binding site for Zn(2+). Residue serine 47 coordinates NADP(+). Residues histidine 67, glutamate 68, cysteine 98, cysteine 101, cysteine 104, cysteine 112, and cysteine 167 each coordinate Zn(2+). Residues threonine 171, 192-197 (GLGGLG), 215-220 (STSPWK), threonine 255, glycine 279, and 302-304 (SMI) each bind NADP(+).

Belongs to the zinc-containing alcohol dehydrogenase family. In terms of assembly, homodimer. Requires Zn(2+) as cofactor.

The catalysed reaction is (E)-cinnamyl alcohol + NADP(+) = (E)-cinnamaldehyde + NADPH + H(+). The enzyme catalyses (E)-coniferol + NADP(+) = (E)-coniferaldehyde + NADPH + H(+). It catalyses the reaction (E)-sinapyl alcohol + NADP(+) = (E)-sinapaldehyde + NADPH + H(+). It carries out the reaction (E)-4-coumaroyl alcohol + NADP(+) = (E)-4-coumaraldehyde + NADPH + H(+). The catalysed reaction is (E)-caffeyl alcohol + NADP(+) = (E)-caffeyl aldehyde + NADPH + H(+). The protein operates within aromatic compound metabolism; phenylpropanoid biosynthesis. Functionally, involved in lignin biosynthesis. Catalyzes the final step specific for the production of lignin monomers. Catalyzes the NADPH-dependent reduction of coniferaldehyde, 5-hydroxyconiferaldehyde, sinapaldehyde, 4-coumaraldehyde and caffeyl aldehyde to their respective alcohols. This Oryza sativa subsp. japonica (Rice) protein is Probable cinnamyl alcohol dehydrogenase 9.